Here is a 53-residue protein sequence, read N- to C-terminus: Antilisterial bacteriocin subtilosin biosynthesis protein AlbB (53 aa).

Transmembrane regions (helical) follow at residues 8–28 (ILLY…FVKS) and 30–50 (YLFT…ARKA).

Its subcellular location is the cell membrane. Functionally, involved in the production of the bacteriocin subtilosin. Required for maximal production and for optimal immunity to subtilosin. This Bacillus subtilis (strain 168) protein is Antilisterial bacteriocin subtilosin biosynthesis protein AlbB (albB).